The sequence spans 199 residues: Fe/S biogenesis protein NfuA (199 aa).

2 residues coordinate [4Fe-4S] cluster: cysteine 151 and cysteine 154.

This sequence belongs to the NfuA family. Homodimer. The cofactor is [4Fe-4S] cluster.

Its function is as follows. Involved in iron-sulfur cluster biogenesis. Binds a 4Fe-4S cluster, can transfer this cluster to apoproteins, and thereby intervenes in the maturation of Fe/S proteins. Could also act as a scaffold/chaperone for damaged Fe/S proteins. This Xanthomonas axonopodis pv. citri (strain 306) protein is Fe/S biogenesis protein NfuA.